The chain runs to 1268 residues: Protein transport protein Sec24B (1268 aa).

Low complexity-rich tracts occupy residues 1 to 14 and 21 to 48; these read MSAPAGSSHPAASA and GGAAVSGAAAPAGPGAGPAPHQQNGPAQ. 4 disordered regions span residues 1–71, 216–263, 303–345, and 362–451; these read MSAP…SGHY, APTV…LTWS, QNVQ…SVTQ, and NNQA…VVPQ. An N-acetylserine modification is found at serine 2. A Phosphoserine modification is found at serine 55. The span at 225–234 shows a compositional bias: polar residues; that stretch reads NSFSGQNTAI. Low complexity-rich tracts occupy residues 245 to 255, 311 to 332, and 365 to 375; these read SQQHHQQQSLS, SPVVSTVLSGSSGSSSTRTPPT, and ASSAPTPLSST. Threonine 329 is modified (phosphothreonine). The span at 376-389 shows a compositional bias: acidic residues; it reads SDDEEEEEEDEEAG. Residues 426–450 are compositionally biased toward pro residues; that stretch reads APDPAPEPDPASAPAPASAPAPVVP. Zn(2+) contacts are provided by cysteine 605, cysteine 608, cysteine 626, and cysteine 629. The interval 605-629 is zinc finger-like; that stretch reads CRSCRTYINPFVSFIDQRRWKCNLC. Residues 1141-1213 form a Gelsolin-like repeat; it reads PQPPLQKLSA…TLSSERARSF (73 aa). A Phosphoserine modification is found at serine 1224.

Belongs to the SEC23/SEC24 family. SEC24 subfamily. In terms of assembly, COPII is composed of at least five proteins: the Sec23/24 complex, the Sec13/31 complex and SAR1. Interacts with STING1; promoting STING1 translocation to COPII vesicles in a STEEP1-dependent manner. Interacts with RNF139. Interacts with TMED2 and TMED10. Interacts with CNIH4.

The protein localises to the cytoplasmic vesicle. The protein resides in the COPII-coated vesicle membrane. It localises to the endoplasmic reticulum membrane. Its subcellular location is the cytoplasm. It is found in the cytosol. In terms of biological role, component of the coat protein complex II (COPII) which promotes the formation of transport vesicles from the endoplasmic reticulum (ER). The coat has two main functions, the physical deformation of the endoplasmic reticulum membrane into vesicles and the selection of cargo molecules for their transport to the Golgi complex. Plays a central role in cargo selection within the COPII complex and together with SEC24A may have a different specificity compared to SEC24C and SEC24D. May package preferentially cargos with cytoplasmic DxE or LxxLE motifs and may also recognize conformational epitopes. In Homo sapiens (Human), this protein is Protein transport protein Sec24B.